Consider the following 297-residue polypeptide: Nicotinate-nucleotide pyrophosphorylase [carboxylating] (297 aa).

An important for hexamer formation region spans residues 8–12; the sequence is LLLPP. Quinolinate-binding positions include arginine 102, 138–139, 160–161, lysine 171, glutamate 201, aspartate 222, 248–250, and glycine 270; these read RK, HR, and SGG.

Belongs to the NadC/ModD family. Hexamer formed by 3 homodimers.

It carries out the reaction nicotinate beta-D-ribonucleotide + CO2 + diphosphate = quinolinate + 5-phospho-alpha-D-ribose 1-diphosphate + 2 H(+). The protein operates within cofactor biosynthesis; NAD(+) biosynthesis; nicotinate D-ribonucleotide from quinolinate: step 1/1. With respect to regulation, activity toward QA is slightly repressed by phosphoribosylpyrophosphate (PRPP) in both a competitive and a non-competitive manner. Competitively inhibited by phthalic acid (PHT). Its function is as follows. Involved in the catabolism of quinolinic acid (QA). This Homo sapiens (Human) protein is Nicotinate-nucleotide pyrophosphorylase [carboxylating] (QPRT).